The sequence spans 287 residues: Phosphatidylserine decarboxylase proenzyme (287 aa).

Catalysis depends on charge relay system; for autoendoproteolytic cleavage activity residues Asp89, His146, and Ser252. Catalysis depends on Ser252, which acts as the Schiff-base intermediate with substrate; via pyruvic acid; for decarboxylase activity. Ser252 is modified (pyruvic acid (Ser); by autocatalysis).

It belongs to the phosphatidylserine decarboxylase family. PSD-B subfamily. Prokaryotic type I sub-subfamily. In terms of assembly, heterodimer of a large membrane-associated beta subunit and a small pyruvoyl-containing alpha subunit. Pyruvate is required as a cofactor. Post-translationally, is synthesized initially as an inactive proenzyme. Formation of the active enzyme involves a self-maturation process in which the active site pyruvoyl group is generated from an internal serine residue via an autocatalytic post-translational modification. Two non-identical subunits are generated from the proenzyme in this reaction, and the pyruvate is formed at the N-terminus of the alpha chain, which is derived from the carboxyl end of the proenzyme. The autoendoproteolytic cleavage occurs by a canonical serine protease mechanism, in which the side chain hydroxyl group of the serine supplies its oxygen atom to form the C-terminus of the beta chain, while the remainder of the serine residue undergoes an oxidative deamination to produce ammonia and the pyruvoyl prosthetic group on the alpha chain. During this reaction, the Ser that is part of the protease active site of the proenzyme becomes the pyruvoyl prosthetic group, which constitutes an essential element of the active site of the mature decarboxylase.

The protein resides in the cell membrane. The enzyme catalyses a 1,2-diacyl-sn-glycero-3-phospho-L-serine + H(+) = a 1,2-diacyl-sn-glycero-3-phosphoethanolamine + CO2. Its pathway is phospholipid metabolism; phosphatidylethanolamine biosynthesis; phosphatidylethanolamine from CDP-diacylglycerol: step 2/2. Catalyzes the formation of phosphatidylethanolamine (PtdEtn) from phosphatidylserine (PtdSer). This chain is Phosphatidylserine decarboxylase proenzyme, found in Shewanella amazonensis (strain ATCC BAA-1098 / SB2B).